We begin with the raw amino-acid sequence, 303 residues long: Quinolinate synthase (303 aa).

Iminosuccinate contacts are provided by histidine 24 and serine 41. Cysteine 86 is a [4Fe-4S] cluster binding site. Residues 112 to 114 and serine 129 each bind iminosuccinate; that span reads YIN. Cysteine 172 is a binding site for [4Fe-4S] cluster. Residues 198 to 200 and threonine 215 each bind iminosuccinate; that span reads HPE. Cysteine 260 contacts [4Fe-4S] cluster.

This sequence belongs to the quinolinate synthase family. Type 2 subfamily. Requires [4Fe-4S] cluster as cofactor.

It is found in the cytoplasm. It catalyses the reaction iminosuccinate + dihydroxyacetone phosphate = quinolinate + phosphate + 2 H2O + H(+). It participates in cofactor biosynthesis; NAD(+) biosynthesis; quinolinate from iminoaspartate: step 1/1. Catalyzes the condensation of iminoaspartate with dihydroxyacetone phosphate to form quinolinate. The chain is Quinolinate synthase from Caldicellulosiruptor saccharolyticus (strain ATCC 43494 / DSM 8903 / Tp8T 6331).